Consider the following 861-residue polypeptide: Integrator complex subunit 6-like (861 aa).

The region spanning 3–227 is the VWFA domain; that stretch reads ILLFLIDTSA…QCLESLVQKV (225 aa). Position 617 is a phosphoserine (Ser-617).

In Mus musculus (Mouse), this protein is Integrator complex subunit 6-like (Ints6l).